The primary structure comprises 447 residues: Argininosuccinate lyase (447 aa).

This sequence belongs to the lyase 1 family. Argininosuccinate lyase subfamily.

It localises to the cytoplasm. The catalysed reaction is 2-(N(omega)-L-arginino)succinate = fumarate + L-arginine. The protein operates within amino-acid biosynthesis; L-arginine biosynthesis; L-arginine from L-ornithine and carbamoyl phosphate: step 3/3. This Bacteroides fragilis (strain YCH46) protein is Argininosuccinate lyase.